A 596-amino-acid polypeptide reads, in one-letter code: Aspartic proteinase yapsin-7 (596 aa).

An N-terminal signal peptide occupies residues 1–25; sequence MTCLILWYLWLISTFQLEFATASTA. N-linked (GlcNAc...) asparagine glycosylation is found at N26 and N59. Topologically, residues 26 to 575 are lumenal; sequence NTTTTAKSGT…SPYTFNKDPA (550 aa). The Peptidase A1 domain maps to 56-440; sequence YYVNSTFGTP…DLEDNTIAIA (385 aa). Residue D74 is part of the active site. N-linked (GlcNAc...) asparagine glycosylation is found at N106, N131, N140, N143, N148, N175, and N308. Residue D321 is part of the active site. N391, N455, N478, N484, N549, and N552 each carry an N-linked (GlcNAc...) asparagine glycan. The chain crosses the membrane as a helical span at residues 576 to 596; sequence GHVTRIASLLLLSIFSILIVL.

Belongs to the peptidase A1 family.

It is found in the cytoplasm. The protein localises to the endoplasmic reticulum membrane. In Saccharomyces cerevisiae (strain ATCC 204508 / S288c) (Baker's yeast), this protein is Aspartic proteinase yapsin-7 (YPS7).